Reading from the N-terminus, the 299-residue chain is Bifunctional protein FolD 2 (299 aa).

NADP(+) contacts are provided by residues 168–170 (GRS), serine 193, and isoleucine 234.

The protein belongs to the tetrahydrofolate dehydrogenase/cyclohydrolase family. In terms of assembly, homodimer.

It carries out the reaction (6R)-5,10-methylene-5,6,7,8-tetrahydrofolate + NADP(+) = (6R)-5,10-methenyltetrahydrofolate + NADPH. The catalysed reaction is (6R)-5,10-methenyltetrahydrofolate + H2O = (6R)-10-formyltetrahydrofolate + H(+). It functions in the pathway one-carbon metabolism; tetrahydrofolate interconversion. Functionally, catalyzes the oxidation of 5,10-methylenetetrahydrofolate to 5,10-methenyltetrahydrofolate and then the hydrolysis of 5,10-methenyltetrahydrofolate to 10-formyltetrahydrofolate. This chain is Bifunctional protein FolD 2, found in Rhizobium etli (strain ATCC 51251 / DSM 11541 / JCM 21823 / NBRC 15573 / CFN 42).